Consider the following 119-residue polypeptide: Large ribosomal subunit protein uL18 (119 aa).

This sequence belongs to the universal ribosomal protein uL18 family. As to quaternary structure, part of the 50S ribosomal subunit; part of the 5S rRNA/L5/L18/L25 subcomplex. Contacts the 5S and 23S rRNAs.

This is one of the proteins that bind and probably mediate the attachment of the 5S RNA into the large ribosomal subunit, where it forms part of the central protuberance. This chain is Large ribosomal subunit protein uL18, found in Borrelia hermsii (strain HS1 / DAH).